Consider the following 1207-residue polypeptide: Glycerotoxin paralog 1 (1207 aa).

In terms of domain architecture, EGF-like spans 79–120; it reads DLNECNRNNGGCTNGKCINTEGSYHCDCDRGYLATSSRTKCE. 5 cysteine pairs are disulfide-bonded: cysteine 83–cysteine 95, cysteine 90–cysteine 104, cysteine 106–cysteine 119, cysteine 124–cysteine 167, and cysteine 151–cysteine 185. A Sushi domain is found at 122–187; sequence VECEPLTLAN…WSGTSPTCQN (66 aa). 2 consecutive WSC domains span residues 300–391 and 392–476; these read VGTS…YRDR and SLGF…NDQG. N-linked (GlcNAc...) asparagine glycosylation is present at asparagine 745.

Dimer; probably disulfide-linked. Interacts with Cav2.2/CACNA1B calcium channel. In terms of tissue distribution, expressed exclusively in the four pharyngeal lobes and in tissue located at the base of the teeth. No distinct expression is visible in the putative venom glands or elsewhere in the pharynx.

The protein resides in the secreted. Functionally, potent venom presynaptic neurotoxin that promotes a long-lasting increase in spontaneous neurotransmitter release at the peripheral and central synapses by selective activation of Cav2.2/CACNA1B (N-type) channels. In addition, it drastically enhances synaptic-vesicle recycling, an effect that is prevented by the Cav2.2-specific inhibitor conotoxin-MVIIA. It activates Cav2.2/CACNA1B by shifting the current-voltage relationship of channels towards more hyperpolarized potentiels in a reversible manner. May have two separate sites of action on Cav2.2: one high affinity linked to changes in gating properties, and a second low affinity that results in block of current activity. The chain is Glycerotoxin paralog 1 from Glycera tridactyla (Glycerine worm).